The following is a 230-amino-acid chain: Thymidylate kinase (230 aa).

20-27 is an ATP binding site; that stretch reads GGEGAGKS.

Belongs to the thymidylate kinase family.

The catalysed reaction is dTMP + ATP = dTDP + ADP. In terms of biological role, phosphorylation of dTMP to form dTDP in both de novo and salvage pathways of dTTP synthesis. The chain is Thymidylate kinase from Rhodopseudomonas palustris (strain TIE-1).